A 635-amino-acid chain; its full sequence is Kelch-like protein 31 (635 aa).

One can recognise a BTB domain in the interval 74 to 138; the sequence is CDLTVATKSK…AYSGKLTLSL (65 aa). The BACK domain occupies 173–274; sequence CMYVVNIADT…TPQDLVSHVQ (102 aa). Kelch repeat units follow at residues 318–366, 367–420, 421–467, 469–514, 516–566, and 567–615; these read VLLT…VLDG, FLYV…TFNG, LLFA…VIDG, ILVS…TVGD, AYVL…TLNN, and KIYL…VVTI.

As to expression, strongly expressed in fast skeletal muscle, and weakly in heart. Not expressed in other tissues.

The chain is Kelch-like protein 31 (klhl31) from Danio rerio (Zebrafish).